Reading from the N-terminus, the 516-residue chain is 3-phosphoshikimate 1-carboxyvinyltransferase, chloroplastic (516 aa).

The transit peptide at 1–72 directs the protein to the chloroplast; sequence MAQSSRICHG…KVTASVSTSE (72 aa). Residues lysine 95, serine 96, and arginine 100 each coordinate 3-phosphoshikimate. Lysine 95 provides a ligand contact to phosphoenolpyruvate. Residues glycine 173 and arginine 203 each contribute to the phosphoenolpyruvate site. The 3-phosphoshikimate site is built by serine 250, serine 251, glutamine 252, serine 278, aspartate 403, and lysine 430. Glutamine 252 contributes to the phosphoenolpyruvate binding site. The active-site Proton acceptor is aspartate 403. 3 residues coordinate phosphoenolpyruvate: arginine 434, arginine 476, and lysine 501.

The protein belongs to the EPSP synthase family.

It localises to the plastid. It is found in the chloroplast. It catalyses the reaction 3-phosphoshikimate + phosphoenolpyruvate = 5-O-(1-carboxyvinyl)-3-phosphoshikimate + phosphate. The protein operates within metabolic intermediate biosynthesis; chorismate biosynthesis; chorismate from D-erythrose 4-phosphate and phosphoenolpyruvate: step 6/7. Functionally, catalyzes the transfer of the enolpyruvyl moiety of phosphoenolpyruvate (PEP) to the 5-hydroxyl of shikimate-3-phosphate (S3P) to produce enolpyruvyl shikimate-3-phosphate and inorganic phosphate. This is 3-phosphoshikimate 1-carboxyvinyltransferase, chloroplastic from Brassica napus (Rape).